Consider the following 252-residue polypeptide: Imidazole glycerol phosphate synthase subunit HisF (252 aa).

Residues D11 and D130 contribute to the active site.

Belongs to the HisA/HisF family. Heterodimer of HisH and HisF.

The protein localises to the cytoplasm. It carries out the reaction 5-[(5-phospho-1-deoxy-D-ribulos-1-ylimino)methylamino]-1-(5-phospho-beta-D-ribosyl)imidazole-4-carboxamide + L-glutamine = D-erythro-1-(imidazol-4-yl)glycerol 3-phosphate + 5-amino-1-(5-phospho-beta-D-ribosyl)imidazole-4-carboxamide + L-glutamate + H(+). It participates in amino-acid biosynthesis; L-histidine biosynthesis; L-histidine from 5-phospho-alpha-D-ribose 1-diphosphate: step 5/9. IGPS catalyzes the conversion of PRFAR and glutamine to IGP, AICAR and glutamate. The HisF subunit catalyzes the cyclization activity that produces IGP and AICAR from PRFAR using the ammonia provided by the HisH subunit. This chain is Imidazole glycerol phosphate synthase subunit HisF, found in Pelotomaculum thermopropionicum (strain DSM 13744 / JCM 10971 / SI).